The sequence spans 289 residues: ATP synthase gamma chain (289 aa).

It belongs to the ATPase gamma chain family. As to quaternary structure, F-type ATPases have 2 components, CF(1) - the catalytic core - and CF(0) - the membrane proton channel. CF(1) has five subunits: alpha(3), beta(3), gamma(1), delta(1), epsilon(1). CF(0) has three main subunits: a, b and c.

It localises to the cell inner membrane. In terms of biological role, produces ATP from ADP in the presence of a proton gradient across the membrane. The gamma chain is believed to be important in regulating ATPase activity and the flow of protons through the CF(0) complex. The chain is ATP synthase gamma chain from Pasteurella multocida (strain Pm70).